Reading from the N-terminus, the 843-residue chain is Tetratricopeptide repeat protein 7B (843 aa).

Residues 97–131 form a TPR 1 repeat; that stretch reads QESNLIMAKLNYVEGDYKEALNIYARVGLDDLPLT. Residues S160 and S202 each carry the phosphoserine modification. 6 TPR repeats span residues 219–252, 363–396, 397–430, 479–514, 516–548, and 549–582; these read ETGL…VETR, SVVY…AFEE, FHLW…KPDD, TYSL…SPTD, QAAF…QGDD, and ANSL…YPEN. Phosphoserine occurs at positions 625, 629, 630, 673, 677, 678, and 681. 4 TPR repeats span residues 696-729, 730-763, 765-797, and 798-831; these read AQIW…FPMS, HNVL…SPTH, KSMQ…NSTA, and HEVW…EASS.

Component of a phosphatidylinositol 4-kinase (PI4K) complex, composed of PI4KA, EFR3 (EFR3A or EFR3B), TTC7 (TTC7A or TTC7B) and HYCC (HYCC1 or HYCC2). Interacts with PI4KA, interaction is direct. Interacts with EFR3 (EFR3A or EFR3B), interaction is direct. Interacts with HYCC (HYCC1 or HYCC2), interaction is direct. Association with the PI4K complex is strongly reduced by TMEM150A.

It is found in the cytoplasm. It localises to the cytosol. The protein resides in the cell membrane. Component of a complex required to localize phosphatidylinositol 4-kinase (PI4K) to the plasma membrane. The complex acts as a regulator of phosphatidylinositol 4-phosphate (PtdIns(4)P) synthesis. In the complex, plays a central role in bridging PI4KA to EFR3B and HYCC1, via direct interactions. This Homo sapiens (Human) protein is Tetratricopeptide repeat protein 7B (TTC7B).